We begin with the raw amino-acid sequence, 583 residues long: Proteasome-associated ATPase (583 aa).

A coiled-coil region spans residues 2-90 (ASREDRDAAN…REEVDRLAQP (89 aa)). 271 to 276 (GCGKTL) serves as a coordination point for ATP. The interval 582-583 (YL) is docks into pockets in the proteasome alpha-ring.

This sequence belongs to the AAA ATPase family. Homohexamer. Assembles into a hexameric ring structure that caps the 20S proteasome core. Strongly interacts with the prokaryotic ubiquitin-like protein Pup through a hydrophobic interface; the interacting region of ARC lies in its N-terminal coiled-coil domain. There is one Pup binding site per ARC hexamer ring. Upon ATP-binding, the C-terminus of ARC interacts with the alpha-rings of the proteasome core, possibly by binding to the intersubunit pockets.

The protein operates within protein degradation; proteasomal Pup-dependent pathway. Functionally, ATPase which is responsible for recognizing, binding, unfolding and translocation of pupylated proteins into the bacterial 20S proteasome core particle. May be essential for opening the gate of the 20S proteasome via an interaction with its C-terminus, thereby allowing substrate entry and access to the site of proteolysis. Thus, the C-termini of the proteasomal ATPase may function like a 'key in a lock' to induce gate opening and therefore regulate proteolysis. The polypeptide is Proteasome-associated ATPase (Acidothermus cellulolyticus (strain ATCC 43068 / DSM 8971 / 11B)).